The chain runs to 321 residues: MSINKTLKIATRQSPLALWQANYVKNRLQQRYSHLSVELVPIITKGDVILDTPLAKIGGKGLFVKELENALLNGEADIAVHSMKDVPMQFPKGLELSVICPREDPRDAFVSNKYRTLDELPQGAIVGTSSLRRQCQLKNWRADLDIRSLRGNVGTRLNKLDQGDYDAIILASAGLIRLGLTERIRSFIEIDTILPACGQGAVGIECRVDDRDVQSLLMPLADQTTTYCVLAERAMNFHLQGGCQVPIGAYAILENNQLYLRGLVGDVHGSQILSAEGQFELSLDFESSQSAVQKAEELGVSIAEQLLQQGADKILQAVYQS.

At cysteine 243 the chain carries S-(dipyrrolylmethanemethyl)cysteine.

It belongs to the HMBS family. Monomer. Dipyrromethane is required as a cofactor.

It catalyses the reaction 4 porphobilinogen + H2O = hydroxymethylbilane + 4 NH4(+). It functions in the pathway porphyrin-containing compound metabolism; protoporphyrin-IX biosynthesis; coproporphyrinogen-III from 5-aminolevulinate: step 2/4. Tetrapolymerization of the monopyrrole PBG into the hydroxymethylbilane pre-uroporphyrinogen in several discrete steps. The polypeptide is Porphobilinogen deaminase (Histophilus somni (strain 129Pt) (Haemophilus somnus)).